Here is a 245-residue protein sequence, read N- to C-terminus: Triosephosphate isomerase (245 aa).

4 to 6 (NWK) is a binding site for substrate. The Electrophile role is filled by His91. The active-site Proton acceptor is Glu161. Substrate-binding positions include Gly167, Ser207, and 228 to 229 (GG).

It belongs to the triosephosphate isomerase family. As to quaternary structure, homodimer.

The protein resides in the cytoplasm. It catalyses the reaction D-glyceraldehyde 3-phosphate = dihydroxyacetone phosphate. It functions in the pathway carbohydrate biosynthesis; gluconeogenesis. The protein operates within carbohydrate degradation; glycolysis; D-glyceraldehyde 3-phosphate from glycerone phosphate: step 1/1. Its function is as follows. Involved in the gluconeogenesis. Catalyzes stereospecifically the conversion of dihydroxyacetone phosphate (DHAP) to D-glyceraldehyde-3-phosphate (G3P). This is Triosephosphate isomerase from Chlorobaculum tepidum (strain ATCC 49652 / DSM 12025 / NBRC 103806 / TLS) (Chlorobium tepidum).